Reading from the N-terminus, the 226-residue chain is MIETISKTIKYHFKNPQLLHEALTHPSIISKDSLKFNYERLEFLGDAVLNIVISEMLFNIFPKDTEGNLAKKKTALVCGNQLVKVAQSINLGQFIIMSDGERTCGGANNHNNLENALEALIGAIYLDGGLTAAQNFIHSFWKHTAIHMDIPPQDAKTILQEFIQGKRLPAPTYHIIDKSGPDHNPIFTVELRIPLYKTIQATGNNKKLAEQKAASLMLNQIKDQIK.

One can recognise an RNase III domain in the interval 2-129 (IETISKTIKY…LIGAIYLDGG (128 aa)). Glu42 serves as a coordination point for Mg(2+). Asp46 is an active-site residue. Residues Asn115 and Glu118 each contribute to the Mg(2+) site. Glu118 is a catalytic residue. In terms of domain architecture, DRBM spans 154-223 (DAKTILQEFI…ASLMLNQIKD (70 aa)).

This sequence belongs to the ribonuclease III family. In terms of assembly, homodimer. It depends on Mg(2+) as a cofactor.

Its subcellular location is the cytoplasm. The enzyme catalyses Endonucleolytic cleavage to 5'-phosphomonoester.. In terms of biological role, digests double-stranded RNA. Involved in the processing of primary rRNA transcript to yield the immediate precursors to the large and small rRNAs (23S and 16S). Processes some mRNAs, and tRNAs when they are encoded in the rRNA operon. Processes pre-crRNA and tracrRNA of type II CRISPR loci if present in the organism. In Ehrlichia canis (strain Jake), this protein is Ribonuclease 3.